An 839-amino-acid chain; its full sequence is Heat shock 70 kDa protein 4L (839 aa).

Serine 74 and serine 508 each carry phosphoserine. Basic and acidic residues predominate over residues 503 to 554 (LEGDHSDAPMETETSFKNENKDNMDKMQVDQEEGHQKCHAEHTPEEEIDHTG). The interval 503–567 (LEGDHSDAPM…KSAVSDKQDR (65 aa)) is disordered. Threonine 545 carries the phosphothreonine modification. Position 579 is a phosphoserine (serine 579). The residue at position 761 (threonine 761) is a Phosphothreonine. The segment at 786-839 (IYKPKPKAEVPEDKPKANSEHNGPMDGQSGTETKSDSTKDSSQHTKSSGEMEVD) is disordered. Composition is skewed to basic and acidic residues over residues 791 to 804 (PKAEVPEDKPKANS) and 818 to 839 (TKSDSTKDSSQHTKSSGEMEVD).

It belongs to the heat shock protein 70 family. As to quaternary structure, homodimer.

It localises to the cytoplasm. The protein resides in the nucleus. In terms of biological role, possesses chaperone activity in vitro where it inhibits aggregation of citrate synthase. The sequence is that of Heat shock 70 kDa protein 4L (HSPA4L) from Homo sapiens (Human).